A 273-amino-acid chain; its full sequence is F-actin-capping protein subunit alpha (273 aa).

The protein belongs to the F-actin-capping protein alpha subunit family. In terms of assembly, component of the F-actin capping complex, composed of a heterodimer of an alpha and a beta subunit.

The protein resides in the cytoplasm. It localises to the cytoskeleton. Its subcellular location is the actin patch. Functionally, F-actin-capping proteins bind in a Ca(2+)-independent manner to the fast growing ends of actin filaments (barbed end) thereby blocking the exchange of subunits at these ends. Unlike other capping proteins (such as gelsolin and severin), these proteins do not sever actin filaments. The chain is F-actin-capping protein subunit alpha (fac-1) from Neurospora crassa (strain ATCC 24698 / 74-OR23-1A / CBS 708.71 / DSM 1257 / FGSC 987).